Reading from the N-terminus, the 447-residue chain is MASWVLSECGLRPLPRVYPKPRTGHPLLNSNPTKLRFSRTDLGNGSSFCLSSGILREKNWALRVSAPLRVLQVEEEEENKEGERVINGGEEFDPGAPPPFKLSDIREAIPKHCWVKDPWRSMGYVVRDVAVVFGLAAVAAYFNNWVVWPLYWFAQSTMFWALFVLGHDCGHGSFSNDPKLNSVVGHILHSSILVPYHGWRISHRTHHQNHGHVENDESWHPLSEKIYKNLDTATKKLRFTLPFPLLAYPIYLWSRSPGKQGSHFHPDSDLFVPNEKKDVITSTVCWTAMLALLVGLSFVIGPVQLLKLYGIPYLGNVMWLDLVTYLHHHGHEDKLPWYRGKEWSYLRGGLTTLDRDYGWINNIHHDIGTHVIHHLFPQIPHYHLIEATEAAKPVLGKYYREPKKSAPLPFHLLGDLTRSLKRDHYVSDVGDVVYYQTDPQLTGAEKS.

The Histidine box-1 signature appears at 167–171; that stretch reads HDCGH. Positions 203–207 match the Histidine box-2 motif; it reads HRTHH. Residues 370-374 carry the Histidine box-3 motif; that stretch reads HVIHH.

The protein belongs to the fatty acid desaturase type 1 family.

It is found in the plastid. Its subcellular location is the chloroplast membrane. It participates in lipid metabolism; polyunsaturated fatty acid biosynthesis. In terms of biological role, chloroplast omega-3 fatty acid desaturase introduces the third double bond in the biosynthesis of 16:3 and 18:3 fatty acids, important constituents of plant membranes. It is thought to use ferredoxin as an electron donor and to act on fatty acids esterified to galactolipids, sulfolipids and phosphatidylglycerol. The polypeptide is Omega-3 fatty acid desaturase, chloroplastic (FAD7) (Sesamum indicum (Oriental sesame)).